Here is a 213-residue protein sequence, read N- to C-terminus: MNIVPISESAVVCSLPPPASIQQQRQLWAFARQLQSEQDIVEVVLGMNNLTVFTDFFVDFKPLVQRLEQLWAELKVSDFQGRHIEIPVIYGGERGQDLSDVAKFHQTTPERIIQMHSEPIYTVYMIGFQAGFPYLGGLPENLHTPRRATPRTVVPAGSVGIGGAQTGIYPFSSPGGWQLIGYTKQALFDKNQAQPTLLQAGDTVKFIVEGIEL.

It belongs to the PxpB family. In terms of assembly, forms a complex composed of PxpA, PxpB and PxpC.

The catalysed reaction is 5-oxo-L-proline + ATP + 2 H2O = L-glutamate + ADP + phosphate + H(+). Functionally, catalyzes the cleavage of 5-oxoproline to form L-glutamate coupled to the hydrolysis of ATP to ADP and inorganic phosphate. The sequence is that of 5-oxoprolinase subunit B from Haemophilus influenzae (strain ATCC 51907 / DSM 11121 / KW20 / Rd).